The chain runs to 684 residues: Glycine--tRNA ligase beta subunit (684 aa).

The protein belongs to the class-II aminoacyl-tRNA synthetase family. As to quaternary structure, tetramer of two alpha and two beta subunits.

The protein localises to the cytoplasm. The enzyme catalyses tRNA(Gly) + glycine + ATP = glycyl-tRNA(Gly) + AMP + diphosphate. The polypeptide is Glycine--tRNA ligase beta subunit (Pseudomonas aeruginosa (strain ATCC 15692 / DSM 22644 / CIP 104116 / JCM 14847 / LMG 12228 / 1C / PRS 101 / PAO1)).